Consider the following 240-residue polypeptide: Large ribosomal subunit protein uL3 (240 aa).

Disordered regions lie at residues 138–158 and 215–240; these read SISHRSHGSTGGRQDPGKTFK and EAPLPGKFRLANEGAEPAPATESAEG. Position 151 is an N5-methylglutamine (Gln151).

Belongs to the universal ribosomal protein uL3 family. In terms of assembly, part of the 50S ribosomal subunit. Forms a cluster with proteins L14 and L19. In terms of processing, methylated by PrmB.

In terms of biological role, one of the primary rRNA binding proteins, it binds directly near the 3'-end of the 23S rRNA, where it nucleates assembly of the 50S subunit. The sequence is that of Large ribosomal subunit protein uL3 from Beijerinckia indica subsp. indica (strain ATCC 9039 / DSM 1715 / NCIMB 8712).